The primary structure comprises 4646 residues: MSEPGGGGGEDGSAGLEVSAVQNVADVSVLQKHLRKLVPLLLEDGGEAPAALEAALEEKSALEQMRKFLSDPQVHTVLVERSTLKEDVGDEGEEEKEFISYNINIDIHYGVKSNSLAFIKRTPVIDADKPVSSQLRVLTLSEDSPYETLHSFISNAVAPFFKSYIRESGKADRDGDKMAPSVEKKIAELEMGLLHLQQNIEIPEISLPIHPMITNVAKQCYERGEKPKVTDFGDKVEDPTFLNQLQSGVNRWIREIQKVTKLDRDPASGTALQEISFWLNLERALYRIQEKRESPEVLLTLDILKHGKRFHATVSFDTDTGLKQALETVNDYNPLMKDFPLNDLLSATELDKIRQALVAIFTHLRKIRNTKYPIQRALRLVEAISRDLSSQLLKVLGTRKLMHVAYEEFEKVMVACFEVFQTWDDEYEKLQVLLRDIVKRKREENLKMVWRINPAHRKLQARLDQMRKFRRQHEQLRAVIVRVLRPQVTAVAQQNQGEVPEPQDMKVAEVLFDAADANAIEEVNLAYENVKEVDGLDVSKEGTEAWEAAMKRYDERIDRVETRITARLRDQLGTAKNANEMFRIFSRFNALFVRPHIRGAIREYQTQLIQRVKDDIESLHDKFKVQYPQSQACKMSHVRDLPPVSGSIIWAKQIDRQLTAYMKRVEDVLGKGWENHVEGQKLKQDGDSFRMKLNTQEIFDDWARKVQQRNLGVSGRIFTIESTRVRGRTGNVLKLKVNFLPEIITLSKEVRNLKWLGFRVPLAIVNKAHQANQLYPFAISLIESVRTYERTCEKVEERNTISLLVAGLKKEVQALIAEGIALVWESYKLDPYVQRLAETVFNFQEKVDDLLIIEEKIDLEVRSLETCMYDHKTFSEILNRVQKAVDDLNLHSYSNLPIWVNKLDMEIERILGVRLQAGLRAWTQVLLGQAEDKAEVDMDTDAPQVSHKPGGEPKIKNVVHELRITNQVIYLNPPIEECRYKLYQEMFAWKMVVLSLPRIQSQRYQVGVHYELTEEEKFYRNALTRMPDGPVALEESYSAVMGIVSEVEQYVKVWLQYQCLWDMQAENIYNRLGEDLNKWQALLVQIRKARGTFDNAETKKEFGPVVIDYGKVQSKVNLKYDSWHKEVLSKFGQMLGSNMTEFHSQISKSRQELEQHSVDTASTSDAVTFITYVQSLKRKIKQFEKQVELYRNGQRLLEKQRFQFPPSWLYIDNIEGEWGAFNDIMRRKDSAIQQQVANLQMKIVQEDRAVESRTTDLLTDWEKTKPVTGNLRPEEALQALTIYEGKFGRLKDDREKCAKAKEALELTDTGLLSGSEERVQVALEELQDLKGVWSELSKVWEQIDQMKEQPWVSVQPRKLRQNLDALLNQLKSFPARLRQYASYEFVQRLLKGYMKINMLVIELKSEALKDRHWKQLMKRLHVNWVVSELTLGQIWDVDLQKNEAIVKDVLLVAQGEMALEEFLKQIREVWNTYELDLVNYQNKCRLIRGWDDLFNKVKEHINSVSAMKLSPYYKVFEEDALSWEDKLNRIMALFDVWIDVQRRWVYLEGIFTGSADIKHLLPVETQRFQSISTEFLALMKKVSKSPLVMDVLNIQGVQRSLERLADLLGKIQKALGEYLERERSSFPRFYFVGDEDLLEIIGNSKNVAKLQKHFKKMFAGVSSIILNEDNSVVLGISSREGEEVMFKTPVSITEHPKINEWLTLVEKEMRVTLAKLLAESVTEVEIFGKATSIDPNTYITWIDKYQAQLVVLSAQIAWSENVETALSSMGGGGDAAPLHSVLSNVEVTLNVLADSVLMEQPPLRRRKLEHLITELVHQRDVTRSLIKSKIDNAKSFEWLSQMRFYFDPKQTDVLQQLSIQMANAKFNYGFEYLGVQDKLVQTPLTDRCYLTMTQALEARLGGSPFGPAGTGKTESVKALGHQLGRFVLVFNCDETFDFQAMGRIFVGLCQVGAWGCFDEFNRLEERMLSAVSQQVQCIQEALREHSNPNYDKTSAPITCELLNKQVKVSPDMAIFITMNPGYAGRSNLPDNLKKLFRSLAMTKPDRQLIAQVMLYSQGFRTAEVLANKIVPFFKLCDEQLSSQSHYDFGLRALKSVLVSAGNVKRERIQKIKREKEERGEAVDEGEIAENLPEQEILIQSVCETMVPKLVAEDIPLLFSLLSDVFPGVQYHRGEMTALREELKKVCQEMYLTYGDGEEVGGMWVEKVLQLYQITQINHGLMMVGPSGSGKSMAWRVLLKALERLEGVEGVAHIIDPKAISKDHLYGTLDPNTREWTDGLFTHVLRKIIDSVRGELQKRQWIVFDGDVDPEWVENLNSVLDDNKLLTLPNGERLSLPPNVRIMFEVQDLKYATLATVSRCGMVWFSEDVLSTDMIFNNFLARLRSIPLDEGEDEAQRRRKGKEDEGEEAASPMLQIQRDAATIMQPYFTSNGLVTKALEHAFQLEHIMDLTRLRCLGSLFSMLHQACRNVAQYNANHPDFPMQIEQLERYIQRYLVYAILWSLSGDSRLKMRAELGEYIRRITTVPLPTAPNIPIIDYEVSISGEWSPWQAKVPQIEVETHKVAAPDVVVPTLDTVRHEALLYTWLAEHKPLVLCGPPGSGKTMTLFSALRALPDMEVVGLNFSSATTPELLLKTFDHYCEYRRTPNGVVLAPVQLGKWLVLFCDEINLPDMDKYGTQRVISFIRQMVEHGGFYRTSDQTWVKLERIQFVGACNPPTDPGRKPLSHRFLRHVPVVYVDYPGPASLTQIYGTFNRAMLRLIPSLRTYAEPLTAAMVEFYTMSQERFTQDTQPHYIYSPREMTRWVRGIFEALRPLETLPVEGLIRIWAHEALRLFQDRLVEDEERRWTDENIDTVALKHFPNIDREKAMSRPILYSNWLSKDYIPVDQEELRDYVKARLKVFYEEELDVPLVLFNEVLDHVLRIDRIFRQPQGHLLLIGVSGAGKTTLSRFVAWMNGLSVYQIKVHRKYTGEDFDEDLRTVLRRSGCKNEKIAFIMDESNVLDSGFLERMNTLLANGEVPGLFEGDEYATLMTQCKEGAQKEGLMLDSHEELYKWFTSQVIRNLHVVFTMNPSSEGLKDRAATSPALFNRCVLNWFGDWSTEALYQVGKEFTSKMDLEKPNYIVPDYMPVVYDKLPQPPSHREAIVNSCVFVHQTLHQANARLAKRGGRTMAITPRHYLDFINHYANLFHEKRSELEEQQMHLNVGLRKIKETVDQVEELRRDLRIKSQELEVKNAAANDKLKKMVKDQQEAEKKKVMSQEIQEQLHKQQEVIADKQMSVKEDLDKVEPAVIEAQNAVKSIKKQHLVEVRSMANPPAAVKLALESICLLLGESTTDWKQIRSIIMRENFIPTIVNFSAEEISDAIREKMKKNYMSNPSYNYEIVNRASLACGPMVKWAIAQLNYADMLKRVEPLRNELQKLEDDAKDNQQKANEVEQMIRDLEASIARYKEEYAVLISEAQAIKADLAAVEAKVNRSTALLKSLSAERERWEKTSETFKNQMSTIAGDCLLSAAFIAYAGYFDQQMRQNLFTTWSHHLQQANIQFRTDIARTEYLSNADERLRWQASSLPADDLCTENAIMLKRFNRYPLIIDPSGQATEFIMNEYKDRKITRTSFLDDAFRKNLESALRFGNPLLVQDVESYDPVLNPVLNREVRRTGGRVLITLGDQDIDLSPSFVIFLSTRDPTVEFPPDLCSRVTFVNFTVTRSSLQSQCLNEVLKAERPDVDEKRSDLLKLQGEFQLRLRQLEKSLLQALNEVKGRILDDDTIITTLENLKREAAEVTRKVEETDIVMQEVETVSQQYLPLSTACSSIYFTMESLKQIHFLYQYSLQFFLDIYHNVLYENPNLKGVTDHTQRLSIITKDLFQVAFNRVARGMLHQDHITFAMLLARIKLKGTVGEPTYDAEFQHFLRGNEIVLSAGSTPRIQGLTVEQAEAVVRLSCLPAFKDLIAKVQADEQFGIWLDSSSPEQTVPYLWSEETPATPIGQAIHRLLLIQAFRPDRLLAMAHMFVSTNLGESFMSIMEQPLDLTHIVGTEVKPNTPVLMCSVPGYDASGHVEDLAAEQNTQITSIAIGSAEGFNQADKAINTAVKSGRWVMLKNVHLAPGWLMQLEKKLHSLQPHACFRLFLTMEINPKVPVNLLRAGRIFVFEPPPGVKANMLRTFSSIPVSRICKSPNERARLYFLLAWFHAIIQERLRYAPLGWSKKYEFGESDLRSACDTVDTWLDDTAKGRQNISPDKIPWSALKTLMAQSIYGGRVDNEFDQRLLNTFLERLFTTRSFDSEFKLACKVDGHKDIQMPDGIRREEFVQWVELLPDTQTPSWLGLPNNAERVLLTTQGVDMISKMLKMQMLEDEDDLAYAETEKKTRTDSTSDGRPAWMRTLHTTASNWLHLIPQTLSHLKRTVENIKDPLFRFFEREVKMGAKLLQDVRQDLADVVQVCEGKKKQTNYLRTLINELVKGILPRSWSHYTVPAGMTVIQWVSDFSERIKQLQNISLAAASGGAKELKNIHVCLGGLFVPEAYITATRQYVAQANSWSLEELCLEVNVTTSQGATLDACSFGVTGLKLQGATCNNNKLSLSNAISTALPLTQLRWVKQTNTEKKASVVTLPVYLNFTRADLIFTVDFEIATKEDPRSFYERGVAVLCTE.

An N-acetylserine modification is found at S2. The tract at residues 53 to 1867 (EAALEEKSAL…SIQMANAKFN (1815 aa)) is stem. S70 carries the phosphoserine modification. Coiled coils occupy residues 181-202 (SVEK…NIEI), 455-478 (AHRK…QLRA), and 543-566 (TEAW…RITA). An interaction with DYNC1I2 region spans residues 448 to 703 (MVWRINPAHR…NTQEIFDDWA (256 aa)). Residues 651–802 (AKQIDRQLTA…EKVEERNTIS (152 aa)) form an interaction with DYNC1LI2 region. K1125 carries the post-translational modification N6-acetyllysine. Coiled coils occupy residues 1171 to 1252 (TYVQ…AVES) and 1357 to 1373 (RKLR…LKSF). S1230 is modified (phosphoserine). AAA regions lie at residues 1868 to 2099 (YGFE…VLVS), 2180 to 2452 (EELK…LTRL), 2556 to 2805 (EVET…WVRG), and 2899 to 3168 (VFYE…GGRT). ATP-binding positions include 1906–1913 (GPAGTGKT) and 2224–2231 (GPSGSGKS). A disordered region spans residues 2390–2411 (GEDEAQRRRKGKEDEGEEAASP). ATP contacts are provided by residues 2595–2602 (GPPGSGKT) and 2937–2944 (GVSGAGKT). 3 coiled-coil regions span residues 3189–3275 (EKRS…ADKQ), 3396–3500 (AIAQ…KNQM), and 3737–3800 (EFQL…VSQQ). The tract at residues 3189–3500 (EKRSELEEQQ…KTSETFKNQM (312 aa)) is stalk. K3480 is modified (N6-acetyllysine). AAA stretches follow at residues 3553–3782 (LSNA…EVTR) and 4005–4221 (AHMF…TVDT). S4162 carries the post-translational modification Phosphoserine. K4283 is modified (N6-acetyllysine). Residue T4366 is modified to Phosphothreonine. S4368 is subject to Phosphoserine.

It belongs to the dynein heavy chain family. Homodimer. The cytoplasmic dynein 1 complex consists of two catalytic heavy chains (HCs) and a number of non-catalytic subunits presented by intermediate chains (ICs), light intermediate chains (LICs) and light chains (LCs); the composition seems to vary in respect to the IC, LIC and LC composition. The heavy chain homodimer serves as a scaffold for the probable homodimeric assembly of the respective non-catalytic subunits. The ICs and LICs bind directly to the HC dimer and dynein LCs assemble on the IC dimer. Interacts with DYNC1LI1; DYNC1LI1 and DYNC1LI2 bind mutually exclusive to DYNC1H1. Interacts with DYNC1LI2; DYNC1LI1 and DYNC1LI2 bind mutually exclusive to DYNC1H1. Interacts with DYNC1I2. Interacts with BICD2. Interacts with isoform 2 of CRACR2A. Interacts with DNALI1.

It localises to the cytoplasm. The protein resides in the cytoskeleton. Functionally, cytoplasmic dynein 1 acts as a motor for the intracellular retrograde motility of vesicles and organelles along microtubules. Dynein has ATPase activity; the force-producing power stroke is thought to occur on release of ADP. Plays a role in mitotic spindle assembly and metaphase plate congression. The chain is Cytoplasmic dynein 1 heavy chain 1 from Homo sapiens (Human).